The following is a 330-amino-acid chain: GMP reductase (330 aa).

Catalysis depends on Cys180, which acts as the Thioimidate intermediate. Residue 209 to 232 (LIADGGIRHNGDIAKSVRFGASMV) coordinates NADP(+).

Belongs to the IMPDH/GMPR family. GuaC type 2 subfamily.

It carries out the reaction IMP + NH4(+) + NADP(+) = GMP + NADPH + 2 H(+). Its function is as follows. Catalyzes the irreversible NADPH-dependent deamination of GMP to IMP. It functions in the conversion of nucleobase, nucleoside and nucleotide derivatives of G to A nucleotides, and in maintaining the intracellular balance of A and G nucleotides. This chain is GMP reductase, found in Lactobacillus delbrueckii subsp. bulgaricus (strain ATCC 11842 / DSM 20081 / BCRC 10696 / JCM 1002 / NBRC 13953 / NCIMB 11778 / NCTC 12712 / WDCM 00102 / Lb 14).